A 492-amino-acid chain; its full sequence is Ribose import ATP-binding protein RbsA (492 aa).

ABC transporter domains are found at residues 3-239 (IDMR…VGRK) and 238-492 (RKLE…TGGK). 35-42 (GENGAGKS) is an ATP binding site.

Belongs to the ABC transporter superfamily. Ribose importer (TC 3.A.1.2.1) family. The complex is composed of an ATP-binding protein (RbsA), two transmembrane proteins (RbsC) and a solute-binding protein (RbsB).

It localises to the cell membrane. It catalyses the reaction D-ribose(out) + ATP + H2O = D-ribose(in) + ADP + phosphate + H(+). In terms of biological role, part of the ABC transporter complex RbsABC involved in ribose import. Responsible for energy coupling to the transport system. This Streptococcus agalactiae serotype III (strain NEM316) protein is Ribose import ATP-binding protein RbsA.